We begin with the raw amino-acid sequence, 192 residues long: Imidazole glycerol phosphate synthase subunit HisH (192 aa).

Positions 1 to 192 constitute a Glutamine amidotransferase type-1 domain; it reads MIVIVDYGLG…QAIQGGFIND (192 aa). The active-site Nucleophile is the Cys77. Residues His169 and Glu171 contribute to the active site.

In terms of assembly, heterodimer of HisH and HisF.

Its subcellular location is the cytoplasm. The enzyme catalyses 5-[(5-phospho-1-deoxy-D-ribulos-1-ylimino)methylamino]-1-(5-phospho-beta-D-ribosyl)imidazole-4-carboxamide + L-glutamine = D-erythro-1-(imidazol-4-yl)glycerol 3-phosphate + 5-amino-1-(5-phospho-beta-D-ribosyl)imidazole-4-carboxamide + L-glutamate + H(+). The catalysed reaction is L-glutamine + H2O = L-glutamate + NH4(+). It participates in amino-acid biosynthesis; L-histidine biosynthesis; L-histidine from 5-phospho-alpha-D-ribose 1-diphosphate: step 5/9. IGPS catalyzes the conversion of PRFAR and glutamine to IGP, AICAR and glutamate. The HisH subunit catalyzes the hydrolysis of glutamine to glutamate and ammonia as part of the synthesis of IGP and AICAR. The resulting ammonia molecule is channeled to the active site of HisF. The protein is Imidazole glycerol phosphate synthase subunit HisH of Staphylococcus aureus (strain bovine RF122 / ET3-1).